A 155-amino-acid polypeptide reads, in one-letter code: 6,7-dimethyl-8-ribityllumazine synthase (155 aa).

Residues Trp23, 57-59 (AWE), and 81-83 (CVI) each bind 5-amino-6-(D-ribitylamino)uracil. 86 to 87 (DT) provides a ligand contact to (2S)-2-hydroxy-3-oxobutyl phosphate. Catalysis depends on His89, which acts as the Proton donor. Asn114 contacts 5-amino-6-(D-ribitylamino)uracil. Arg128 provides a ligand contact to (2S)-2-hydroxy-3-oxobutyl phosphate.

Belongs to the DMRL synthase family. As to quaternary structure, forms an icosahedral capsid composed of 60 subunits, arranged as a dodecamer of pentamers.

It carries out the reaction (2S)-2-hydroxy-3-oxobutyl phosphate + 5-amino-6-(D-ribitylamino)uracil = 6,7-dimethyl-8-(1-D-ribityl)lumazine + phosphate + 2 H2O + H(+). It participates in cofactor biosynthesis; riboflavin biosynthesis; riboflavin from 2-hydroxy-3-oxobutyl phosphate and 5-amino-6-(D-ribitylamino)uracil: step 1/2. Its function is as follows. Catalyzes the formation of 6,7-dimethyl-8-ribityllumazine by condensation of 5-amino-6-(D-ribitylamino)uracil with 3,4-dihydroxy-2-butanone 4-phosphate. This is the penultimate step in the biosynthesis of riboflavin. The polypeptide is 6,7-dimethyl-8-ribityllumazine synthase (Stenotrophomonas maltophilia (strain R551-3)).